The following is a 695-amino-acid chain: UvrABC system protein C (695 aa).

Over residues 1-10 the composition is skewed to basic and acidic residues; the sequence is MNQDPAETRD. The segment at 1-53 is disordered; it reads MNQDPAETRDTAAPPPADTTSPSPVSPELEPRSAPGAQDIDAASASLTVDEDD. Residues 18–27 are compositionally biased toward low complexity; sequence DTTSPSPVSP. In terms of domain architecture, GIY-YIG spans 88 to 166; that stretch reads TSPGVYRMLN…IKQLRPRFNV (79 aa). The 36-residue stretch at 276–311 folds into the UVR domain; sequence RAVKQELAVEMEKASNELEFETAALYRDRLAALSAI.

This sequence belongs to the UvrC family. In terms of assembly, interacts with UvrB in an incision complex.

It localises to the cytoplasm. Functionally, the UvrABC repair system catalyzes the recognition and processing of DNA lesions. UvrC both incises the 5' and 3' sides of the lesion. The N-terminal half is responsible for the 3' incision and the C-terminal half is responsible for the 5' incision. This is UvrABC system protein C from Rhodopseudomonas palustris (strain BisB5).